The following is a 451-amino-acid chain: Cyclin-dependent kinase 18 (451 aa).

Phosphoserine is present on residues serine 12, serine 51, serine 66, serine 75, and serine 109. The Protein kinase domain occupies 121 to 402 (YVKLDKLGEG…AEAALNHPYF (282 aa)). ATP is bound by residues 127–135 (LGEGTYATV) and lysine 150. The active-site Proton acceptor is aspartate 242. 2 positions are modified to phosphoserine: serine 417 and serine 420.

It belongs to the protein kinase superfamily. CMGC Ser/Thr protein kinase family. CDC2/CDKX subfamily. As to expression, in brain, kidney, intestine and at a much lower level, in fetal tissues.

It carries out the reaction L-seryl-[protein] + ATP = O-phospho-L-seryl-[protein] + ADP + H(+). The enzyme catalyses L-threonyl-[protein] + ATP = O-phospho-L-threonyl-[protein] + ADP + H(+). Functionally, may play a role in signal transduction cascades in terminally differentiated cells. The chain is Cyclin-dependent kinase 18 (Cdk18) from Mus musculus (Mouse).